The sequence spans 636 residues: tRNA uridine 5-carboxymethylaminomethyl modification enzyme MnmG (636 aa).

Gly18 to Gly23 lines the FAD pocket. Gly281–Phe295 is a binding site for NAD(+).

Belongs to the MnmG family. Homodimer. Heterotetramer of two MnmE and two MnmG subunits. FAD serves as cofactor.

It localises to the cytoplasm. Its function is as follows. NAD-binding protein involved in the addition of a carboxymethylaminomethyl (cmnm) group at the wobble position (U34) of certain tRNAs, forming tRNA-cmnm(5)s(2)U34. The chain is tRNA uridine 5-carboxymethylaminomethyl modification enzyme MnmG from Lactiplantibacillus plantarum (strain ATCC BAA-793 / NCIMB 8826 / WCFS1) (Lactobacillus plantarum).